We begin with the raw amino-acid sequence, 423 residues long: Gamma-glutamyl phosphate reductase (423 aa).

It belongs to the gamma-glutamyl phosphate reductase family.

The protein localises to the cytoplasm. The catalysed reaction is L-glutamate 5-semialdehyde + phosphate + NADP(+) = L-glutamyl 5-phosphate + NADPH + H(+). It participates in amino-acid biosynthesis; L-proline biosynthesis; L-glutamate 5-semialdehyde from L-glutamate: step 2/2. Its function is as follows. Catalyzes the NADPH-dependent reduction of L-glutamate 5-phosphate into L-glutamate 5-semialdehyde and phosphate. The product spontaneously undergoes cyclization to form 1-pyrroline-5-carboxylate. This is Gamma-glutamyl phosphate reductase from Burkholderia vietnamiensis (strain G4 / LMG 22486) (Burkholderia cepacia (strain R1808)).